The sequence spans 72 residues: Large ribosomal subunit protein bL31 (72 aa).

Zn(2+)-binding residues include C16, C18, C37, and C40.

The protein belongs to the bacterial ribosomal protein bL31 family. Type A subfamily. As to quaternary structure, part of the 50S ribosomal subunit. It depends on Zn(2+) as a cofactor.

Functionally, binds the 23S rRNA. This Hahella chejuensis (strain KCTC 2396) protein is Large ribosomal subunit protein bL31.